The primary structure comprises 833 residues: Leucine--tRNA ligase (833 aa).

Residues 41-52 (PYPSGAGLHVGH) carry the 'HIGH' region motif. The short motif at 610 to 614 (KMSKS) is the 'KMSKS' region element. Residue lysine 613 coordinates ATP.

This sequence belongs to the class-I aminoacyl-tRNA synthetase family.

Its subcellular location is the cytoplasm. The enzyme catalyses tRNA(Leu) + L-leucine + ATP = L-leucyl-tRNA(Leu) + AMP + diphosphate. This is Leucine--tRNA ligase from Streptococcus pyogenes serotype M3 (strain ATCC BAA-595 / MGAS315).